The sequence spans 866 residues: Probable beta-glucosidase F (866 aa).

An N-terminal signal peptide occupies residues 1-20 (MAAFPAYLALLSYLVPGALS). 3 N-linked (GlcNAc...) asparagine glycosylation sites follow: Asn-65, Asn-73, and Asn-257. Residue Asp-285 is part of the active site. Asn-328, Asn-360, Asn-395, Asn-421, Asn-474, Asn-659, Asn-664, and Asn-724 each carry an N-linked (GlcNAc...) asparagine glycan. Residues 725 to 748 (SSKTYPYPDGYTTEPKPAPRAGGA) form a disordered region.

The protein belongs to the glycosyl hydrolase 3 family.

The protein resides in the secreted. It catalyses the reaction Hydrolysis of terminal, non-reducing beta-D-glucosyl residues with release of beta-D-glucose.. The protein operates within glycan metabolism; cellulose degradation. Beta-glucosidases are one of a number of cellulolytic enzymes involved in the degradation of cellulosic biomass. Catalyzes the last step releasing glucose from the inhibitory cellobiose. This is Probable beta-glucosidase F (bglF) from Aspergillus oryzae (strain ATCC 42149 / RIB 40) (Yellow koji mold).